Here is a 237-residue protein sequence, read N- to C-terminus: Ribosomal RNA small subunit methyltransferase G (237 aa).

S-adenosyl-L-methionine-binding positions include Gly78, Phe83, 129–130, and Arg148; that span reads AE.

Belongs to the methyltransferase superfamily. RNA methyltransferase RsmG family.

The protein localises to the cytoplasm. Functionally, specifically methylates the N7 position of a guanine in 16S rRNA. In Streptococcus pyogenes serotype M3 (strain ATCC BAA-595 / MGAS315), this protein is Ribosomal RNA small subunit methyltransferase G.